A 736-amino-acid chain; its full sequence is Sulfate transporter (736 aa).

The segment at 1–28 (MSSESKEPHVLSPKDSFEGNDRYSPPSR) is disordered. A phosphoserine mark is found at Ser-12 and Ser-16. The next 2 membrane-spanning stretches (helical) occupy residues 114-134 (VMSG…YSLL) and 139-159 (PIYG…LGTS). Asn-201 and Asn-207 each carry an N-linked (GlcNAc...) asparagine glycan. Helical transmembrane passes span 229-249 (FLAG…VSVY), 257-277 (GFVT…LLGL), 380-400 (LIPS…AITV), 422-442 (AIGF…SAAL), 457-477 (LSGV…APLF), and 526-546 (LIST…CVIL). One can recognise an STAS domain in the interval 570 to 721 (AYKNLQARPG…YSVYEAMAFA (152 aa)).

It belongs to the SLC26A/SulP transporter (TC 2.A.53) family. N-glycosylated.

Its subcellular location is the cell membrane. The protein localises to the apical cell membrane. It catalyses the reaction oxalate(in) + sulfate(out) = oxalate(out) + sulfate(in). The catalysed reaction is sulfate(out) + 2 chloride(in) = sulfate(in) + 2 chloride(out). It carries out the reaction oxalate(out) + 2 chloride(in) = oxalate(in) + 2 chloride(out). The enzyme catalyses bromide(in) + chloride(out) = bromide(out) + chloride(in). It catalyses the reaction nitrate(in) + chloride(out) = nitrate(out) + chloride(in). The catalysed reaction is iodide(in) + chloride(out) = iodide(out) + chloride(in). Its function is as follows. Sulfate transporter which mediates sulfate uptake into chondrocytes in order to maintain adequate sulfation of proteoglycans which is needed for cartilage development. Mediates electroneutral anion exchange of sulfate ions for oxalate ions, sulfate and oxalate ions for chloride and/or hydroxyl ions and chloride ions for bromide, iodide and nitrate ions. The coupling of sulfate transport to both hydroxyl and chloride ions likely serves to ensure transport at both acidic pH when most sulfate uptake is mediated by sulfate-hydroxide exchange and alkaline pH when most sulfate uptake is mediated by sulfate-chloride exchange. Essential for chondrocyte proliferation, differentiation and cell size expansion. The protein is Sulfate transporter (SLC26A2) of Equus caballus (Horse).